The following is a 404-amino-acid chain: Cysteine desulfurase IscS (404 aa).

Pyridoxal 5'-phosphate contacts are provided by residues 75-76 (AT), Asn155, Gln183, and 203-205 (SGH). Lys206 bears the N6-(pyridoxal phosphate)lysine mark. Thr243 serves as a coordination point for pyridoxal 5'-phosphate. Residue Cys328 is the Cysteine persulfide intermediate of the active site. A [2Fe-2S] cluster-binding site is contributed by Cys328.

The protein belongs to the class-V pyridoxal-phosphate-dependent aminotransferase family. NifS/IscS subfamily. In terms of assembly, homodimer. Forms a heterotetramer with IscU, interacts with other sulfur acceptors. Requires pyridoxal 5'-phosphate as cofactor.

It is found in the cytoplasm. The enzyme catalyses (sulfur carrier)-H + L-cysteine = (sulfur carrier)-SH + L-alanine. The protein operates within cofactor biosynthesis; iron-sulfur cluster biosynthesis. Functionally, master enzyme that delivers sulfur to a number of partners involved in Fe-S cluster assembly, tRNA modification or cofactor biosynthesis. Catalyzes the removal of elemental sulfur atoms from cysteine to produce alanine. Functions as a sulfur delivery protein for Fe-S cluster synthesis onto IscU, an Fe-S scaffold assembly protein, as well as other S acceptor proteins. The polypeptide is Cysteine desulfurase IscS (Shewanella baltica (strain OS185)).